The primary structure comprises 283 residues: Pyridoxal kinase PdxY (283 aa).

S8 serves as a coordination point for substrate. Residues D110 and E147 each contribute to the ATP site. Position 219 (D219) interacts with substrate.

It belongs to the pyridoxine kinase family. PdxY subfamily. In terms of assembly, homodimer. The cofactor is Mg(2+).

It catalyses the reaction pyridoxal + ATP = pyridoxal 5'-phosphate + ADP + H(+). It functions in the pathway cofactor metabolism; pyridoxal 5'-phosphate salvage; pyridoxal 5'-phosphate from pyridoxal: step 1/1. Its function is as follows. Pyridoxal kinase involved in the salvage pathway of pyridoxal 5'-phosphate (PLP). Catalyzes the phosphorylation of pyridoxal to PLP. This chain is Pyridoxal kinase PdxY, found in Leifsonia xyli subsp. xyli (strain CTCB07).